A 221-amino-acid chain; its full sequence is PKHD-type hydroxylase P9515_13321 (221 aa).

The Fe2OG dioxygenase domain maps to 80-174 (TIHGIMFTKS…RLVCVGWIES (95 aa)). Fe cation-binding residues include His-98, Asp-100, and His-155. A 2-oxoglutarate-binding site is contributed by Arg-165.

The cofactor is Fe(2+). It depends on L-ascorbate as a cofactor.

In Prochlorococcus marinus (strain MIT 9515), this protein is PKHD-type hydroxylase P9515_13321.